We begin with the raw amino-acid sequence, 819 residues long: LPS-assembly protein LptD (819 aa).

The first 33 residues, 1-33 (MRQMKYQFKFNPLAAAIFTLLCGGSMQSSYADA), serve as a signal peptide directing secretion.

Belongs to the LptD family. In terms of assembly, component of the lipopolysaccharide transport and assembly complex. Interacts with LptE and LptA.

Its subcellular location is the cell outer membrane. Together with LptE, is involved in the assembly of lipopolysaccharide (LPS) at the surface of the outer membrane. In Acinetobacter baylyi (strain ATCC 33305 / BD413 / ADP1), this protein is LPS-assembly protein LptD.